The primary structure comprises 151 residues: Pyruvoyl-dependent arginine decarboxylase (151 aa).

Serine 42 carries the post-translational modification Pyruvic acid (Ser).

It belongs to the PdaD family. The cofactor is pyruvate.

It carries out the reaction L-arginine + H(+) = agmatine + CO2. This chain is Pyruvoyl-dependent arginine decarboxylase, found in Methanothermobacter thermautotrophicus (strain ATCC 29096 / DSM 1053 / JCM 10044 / NBRC 100330 / Delta H) (Methanobacterium thermoautotrophicum).